A 179-amino-acid polypeptide reads, in one-letter code: uncharacterized protein (179 aa).

Residues 27 to 54 (TAKKSRVQAREARAAVEENKKAQLERDK) are disordered.

This is an uncharacterized protein from Escherichia coli (strain K12).